A 447-amino-acid polypeptide reads, in one-letter code: MTKVITRFAPSPTGMLHVGNIRAALLNWLYAKKHNGQFILRFDDTDLERSKQEYKDAIEEDLKFLNIHWDQTFNQLSRLSRYDAIKNLLLDKKRLYACYETPEELELKRKFQLSKGLPPIYDRASLNLTEEQAKKYIEQRRKPHYRFLVNHEPISWHDMIKGEVKYDGKALSDPIVIRADGSMTYMLCSVIDDIDYDITHIIRGEDHVSNTAIQMQMFEALNTTPPTFGHLSLIINKDEKISKRVGGFEIATLRKEIGIEAMAIASFFSLLGSSAQILPYKSMEKLANQFEISSFSKSPTIYQPEDLERLNHKLLISLDFDTVKERLKEIDAEYIDENFWLSVSPNLQTLRDVKDWWEICHQTPNVETLNLDKEYLKQAAELLPKGEITKDSWSIWTKEITNITGRKGKELFLPLRLALTARESGPEIASVLPLIDREEIIKRLTSA.

Positions 10–20 (PSPTGMLHVGN) match the 'HIGH' region motif. A 'KMSKS' region motif is present at residues 240-244 (KISKR). An ATP-binding site is contributed by Lys243.

Belongs to the class-I aminoacyl-tRNA synthetase family. Glutamate--tRNA ligase type 1 subfamily. Monomer.

It localises to the cytoplasm. The catalysed reaction is tRNA(Glu) + L-glutamate + ATP = L-glutamyl-tRNA(Glu) + AMP + diphosphate. In terms of biological role, catalyzes the attachment of glutamate to tRNA(Glu) in a two-step reaction: glutamate is first activated by ATP to form Glu-AMP and then transferred to the acceptor end of tRNA(Glu). In Rickettsia conorii (strain ATCC VR-613 / Malish 7), this protein is Glutamate--tRNA ligase 1.